The primary structure comprises 160 residues: 3-hydroxyacyl-[acyl-carrier-protein] dehydratase FabZ (160 aa).

The active site involves H63.

This sequence belongs to the thioester dehydratase family. FabZ subfamily.

It is found in the cytoplasm. It catalyses the reaction a (3R)-hydroxyacyl-[ACP] = a (2E)-enoyl-[ACP] + H2O. Involved in unsaturated fatty acids biosynthesis. Catalyzes the dehydration of short chain beta-hydroxyacyl-ACPs and long chain saturated and unsaturated beta-hydroxyacyl-ACPs. This is 3-hydroxyacyl-[acyl-carrier-protein] dehydratase FabZ from Xylella fastidiosa (strain 9a5c).